Consider the following 101-residue polypeptide: Small ribosomal subunit protein uS14 (101 aa).

It belongs to the universal ribosomal protein uS14 family. Part of the 30S ribosomal subunit. Contacts proteins S3 and S10.

In terms of biological role, binds 16S rRNA, required for the assembly of 30S particles and may also be responsible for determining the conformation of the 16S rRNA at the A site. The sequence is that of Small ribosomal subunit protein uS14 from Francisella tularensis subsp. tularensis (strain FSC 198).